The chain runs to 27 residues: Zinc metalloproteinase multactivase catalytic subunit (27 aa).

A Peptidase M12B domain is found at 12–27 (FIELVIIVDHSXXTYK). E14 lines the Ca(2+) pocket.

The protein belongs to the venom metalloproteinase (M12B) family. P-III subfamily. P-IIId sub-subfamily. As to quaternary structure, heterodimer of a metalloproteinase subunit and a regulatory subunit comprising two homologous disulfide-linked lectins (AC P81798). The cofactor is Zn(2+). In terms of tissue distribution, expressed by the venom gland.

The protein localises to the secreted. In terms of biological role, this carinactivase-like calcium-dependent prothrombin (F2) activator activates prothrombin via recognition of the calcium ion bound conformation of its gamma-carboxyglutamic acid (GLA) domain, and the subsequent conversion of prothrombin to active thrombin is catalyzed by the catalytic subunit. The sequence is that of Zinc metalloproteinase multactivase catalytic subunit from Echis multisquamatus (Central Asian sand viper).